A 93-amino-acid polypeptide reads, in one-letter code: Integration host factor subunit beta (93 aa).

Belongs to the bacterial histone-like protein family. In terms of assembly, heterodimer of an alpha and a beta chain.

In terms of biological role, this protein is one of the two subunits of integration host factor, a specific DNA-binding protein that functions in genetic recombination as well as in transcriptional and translational control. The protein is Integration host factor subunit beta of Aliivibrio fischeri (strain ATCC 700601 / ES114) (Vibrio fischeri).